The primary structure comprises 241 residues: Ribose-5-phosphate isomerase A (241 aa).

Substrate contacts are provided by residues 29–32, 84–87, and 97–100; these read TGTT, DGAD, and KGGG. Glu-106 functions as the Proton acceptor in the catalytic mechanism. Lys-124 contributes to the substrate binding site.

Belongs to the ribose 5-phosphate isomerase family. Homodimer.

It carries out the reaction aldehydo-D-ribose 5-phosphate = D-ribulose 5-phosphate. It functions in the pathway carbohydrate degradation; pentose phosphate pathway; D-ribose 5-phosphate from D-ribulose 5-phosphate (non-oxidative stage): step 1/1. Its function is as follows. Catalyzes the reversible conversion of ribose-5-phosphate to ribulose 5-phosphate. The sequence is that of Ribose-5-phosphate isomerase A from Thermoplasma volcanium (strain ATCC 51530 / DSM 4299 / JCM 9571 / NBRC 15438 / GSS1).